Consider the following 491-residue polypeptide: Iota-carrageenase (491 aa).

Positions methionine 1–glycine 19 are cleaved as a signal peptide. Cysteine 422 and cysteine 490 are joined by a disulfide.

This sequence belongs to the glycosyl hydrolase 82 family.

Its subcellular location is the secreted. The catalysed reaction is Endohydrolysis of 1,4-beta-D-linkages between D-galactose 4-sulfate and 3,6-anhydro-D-galactose-2-sulfate in iota-carrageenans.. Functionally, hydrolyzes iota-carrageenans, sulfated 1,3-alpha-1,4-beta galactans from red algal cell walls, with an inversion of anomeric configuration. Also active against hybrid iota-/nu-carrageenan, not active against kappa- or lambda-carrageenans. In Zobellia galactanivorans (strain DSM 12802 / CCUG 47099 / CIP 106680 / NCIMB 13871 / Dsij), this protein is Iota-carrageenase.